The chain runs to 225 residues: Receptor-transporting protein 2 (225 aa).

Residues 1 to 196 (MCTSLTTCEW…RAQAGSGYNF (196 aa)) lie on the Cytoplasmic side of the membrane. Residues 52-161 (ASGRFHCSWC…AEFCEACQEG (110 aa)) form a 3CxxC-type zinc finger. The helical transmembrane segment at 197 to 219 (LSLRWCLFWASLCLLVVYLQFSF) threads the bilayer. Residues 220 to 225 (LSPAFF) lie on the Extracellular side of the membrane.

The protein belongs to the TMEM7 family. Interacts with olfactory receptors. As to expression, expressed in circumvallate papillae and testis.

It is found in the cell membrane. Functionally, specifically promotes functional cell surface expression of olfactory receptors, but not of other GPCRs. The polypeptide is Receptor-transporting protein 2 (RTP2) (Homo sapiens (Human)).